We begin with the raw amino-acid sequence, 315 residues long: Olfactory receptor 5AN6 (315 aa).

At 1–29 (MPGGRNSTVITKFILVGFSDFPKLKLVLF) the chain is on the extracellular side. Residues 30 to 50 (VIFLGSYLSTVVWNLGLIILI) form a helical membrane-spanning segment. Residues 51–54 (RIDP) are Cytoplasmic-facing. A helical membrane pass occupies residues 55–75 (YLHTPMYFFLSNLSFLDFCYI). Over 76–99 (SSTTPKMLSGFFQKSKSISFVGCT) the chain is Extracellular. Cysteines 98 and 180 form a disulfide. A helical membrane pass occupies residues 100 to 120 (MQYFIFSSLGLSECCLLAAMA). At 121-123 (YDR) the chain is on the cytoplasmic side. The chain crosses the membrane as a helical span at residues 124–143 (YAAICNPLLYTAIMSPSLCV). Position 144 (H144) is a topological domain, extracellular. A helical membrane pass occupies residues 145–165 (MVVGAYSTGLLGSLIQLCAIL). Over 166–202 (QLHFCGPNIINHFFCDLPQLLVLSCSETFPLQVLKFV) the chain is Cytoplasmic. The helical transmembrane segment at 203-223 (IAVIFGVASVIVILISYGYII) threads the bilayer. Topologically, residues 224-240 (GTILNISSVEGRSKAFN) are extracellular. A helical membrane pass occupies residues 241–261 (TCASHLTAVTLFFGSGLFVYM). Residues 262–272 (RPSSNSSQGYD) lie on the Cytoplasmic side of the membrane. A helical transmembrane segment spans residues 273–293 (KMASVFYTVVIPMLNPLIYSL). Residues 294–315 (RNKEIKDALQRCKNKCFSQCHC) lie on the Extracellular side of the membrane.

It belongs to the G-protein coupled receptor 1 family. Localized in the dorsomedial and ventral region of the olfactory bulb.

It localises to the cell membrane. Odorant receptor specific for muscone. Muscone-binding causes a conformation change that triggers signaling via G(s)-class of G alpha protein GNAL, activating adenylyl cyclase. In Mus musculus (Mouse), this protein is Olfactory receptor 5AN6.